We begin with the raw amino-acid sequence, 216 residues long: Adenylate kinase (216 aa).

An ATP-binding site is contributed by 13-18; that stretch reads GAGKGT. An NMP region spans residues 33-66; the sequence is TTGDALRANKDMDISDMDTEYDTPREYMEAGDLV. AMP-binding positions include Thr-34, Arg-39, 64-66, 89-92, and Gln-96; these read DLV and GYPR. An LID region spans residues 125 to 162; it reads GRRVCDDCGTNYHVEFNQPEEDGVCDECGGDLIQRDDD. An ATP-binding site is contributed by Arg-126. Residues Cys-129, Cys-132, Cys-149, and Cys-152 each contribute to the Zn(2+) site. AMP contacts are provided by Arg-159 and Arg-170. Position 198 (Gln-198) interacts with ATP.

Belongs to the adenylate kinase family. In terms of assembly, monomer.

It is found in the cytoplasm. It catalyses the reaction AMP + ATP = 2 ADP. It participates in purine metabolism; AMP biosynthesis via salvage pathway; AMP from ADP: step 1/1. Functionally, catalyzes the reversible transfer of the terminal phosphate group between ATP and AMP. Plays an important role in cellular energy homeostasis and in adenine nucleotide metabolism. In Haloarcula marismortui (strain ATCC 43049 / DSM 3752 / JCM 8966 / VKM B-1809) (Halobacterium marismortui), this protein is Adenylate kinase.